Here is a 221-residue protein sequence, read N- to C-terminus: GTPase Obg (221 aa).

The OBG-type G domain occupies 1 to 61 (PSALRLVLLN…LKYKLLEIVQ (61 aa)). GTP-binding positions include 10 to 13 (NKAD) and 42 to 44 (SAV). An OCT domain is found at 82–162 (VVHRTKGQFQ…IGGISFEWEP (81 aa)).

It belongs to the TRAFAC class OBG-HflX-like GTPase superfamily. OBG GTPase family. As to quaternary structure, monomer. Requires Mg(2+) as cofactor.

It localises to the cytoplasm. In terms of biological role, an essential GTPase which binds GTP, GDP and possibly (p)ppGpp with moderate affinity, with high nucleotide exchange rates and a fairly low GTP hydrolysis rate. Plays a role in control of the cell cycle, stress response, ribosome biogenesis and in those bacteria that undergo differentiation, in morphogenesis control. This chain is GTPase Obg, found in Corynebacterium melassecola.